The following is a 300-amino-acid chain: Mitochondrial tricarboxylate transporter 1 (300 aa).

3 Solcar repeats span residues 8 to 98 (VSPS…FRSM), 107 to 197 (LSNS…LRDW), and 209 to 294 (INWL…VVWL). The next 6 membrane-spanning stretches (helical) occupy residues 11–31 (SVSV…TFPI), 67–87 (PKGL…KAGV), 114–134 (LAGM…SETI), 172–191 (GVVP…LGTY), 208–228 (LINW…AVYG), and 277–297 (LIVS…LLAG).

The protein belongs to the mitochondrial carrier (TC 2.A.29) family.

The protein localises to the mitochondrion membrane. Its function is as follows. Mitochondrial tricarboxylate transporter; part of the gene cluster that mediates the biosynthesis of itaconic acid and 2-hydroxyparaconate. Cis-aconitate is secreted by the mitochondrial tricarboxylate transporter MTT1. In the cytosol cis-aconitate is converted into trans-aconitate via isomerization by the aconitate-delta-isomerase ADI1. Decarboxylation of trans-aconitate by the trans-aconitate decarboxylase TAD1 then leads then to the production of itaconic acid. The cytochrome P450 monooxygenase CYP3 further converts itaconate to 2-hydroxyparaconate via oxidation of the double bond, leading to a transient epoxide, which can subsequently be lactonized to produce 2-hydroxyparaconate. Secretion of itaconate and possibly 2-hydroxyparaconate into the medium is mediated by the major facilitator ITP1. The glyoxalase domain-containing protein RDO1 is not involved in the biosynthesis of itaconate and 2-hydroxyparaconate, however, it might play a role in the further conversion of 2-hydroxyparaconate to itatartarate. In Mycosarcoma maydis (Corn smut fungus), this protein is Mitochondrial tricarboxylate transporter 1.